We begin with the raw amino-acid sequence, 693 residues long: Elongation factor G (693 aa).

A tr-type G domain is found at 8-282 (EKTRNIGIMA…AVIDYLPSPL (275 aa)). GTP contacts are provided by residues 17-24 (AHVDAGKT), 81-85 (DTPGH), and 135-138 (NKMD).

It belongs to the TRAFAC class translation factor GTPase superfamily. Classic translation factor GTPase family. EF-G/EF-2 subfamily.

The protein resides in the cytoplasm. Catalyzes the GTP-dependent ribosomal translocation step during translation elongation. During this step, the ribosome changes from the pre-translocational (PRE) to the post-translocational (POST) state as the newly formed A-site-bound peptidyl-tRNA and P-site-bound deacylated tRNA move to the P and E sites, respectively. Catalyzes the coordinated movement of the two tRNA molecules, the mRNA and conformational changes in the ribosome. This Streptococcus pneumoniae serotype 2 (strain D39 / NCTC 7466) protein is Elongation factor G.